We begin with the raw amino-acid sequence, 824 residues long: Translation initiation factor IF-2 (824 aa).

The tract at residues 1 to 234 is disordered; that stretch reads MSDQDGKKPL…RQKAMGGSVD (234 aa). Composition is skewed to basic and acidic residues over residues 59–75 and 82–144; these read GGKRDKSVPDAEMDRRL and KARE…RRNA. A compositionally biased stretch (low complexity) spans 145 to 159; sequence PPEAAAPAVDPAAAA. Basic and acidic residues predominate over residues 170–186; sequence ARREPERDNKRENRSRG. The tr-type G domain maps to 321–491; sequence PRPPVITIMG…ALQAELLELK (171 aa). The segment at 330–337 is G1; that stretch reads GHVDHGKT. 330-337 contributes to the GTP binding site; that stretch reads GHVDHGKT. The interval 355 to 359 is G2; sequence GITQH. The segment at 377–380 is G3; it reads DTPG. Residues 377 to 381 and 431 to 434 each bind GTP; these read DTPGH and NKID. Residues 431–434 form a G4 region; the sequence is NKID. A G5 region spans residues 467-469; sequence SAM.

The protein belongs to the TRAFAC class translation factor GTPase superfamily. Classic translation factor GTPase family. IF-2 subfamily.

The protein resides in the cytoplasm. One of the essential components for the initiation of protein synthesis. Protects formylmethionyl-tRNA from spontaneous hydrolysis and promotes its binding to the 30S ribosomal subunits. Also involved in the hydrolysis of GTP during the formation of the 70S ribosomal complex. The protein is Translation initiation factor IF-2 of Jannaschia sp. (strain CCS1).